Here is a 214-residue protein sequence, read N- to C-terminus: Redox-sensing transcriptional repressor Rex (214 aa).

A DNA-binding region (H-T-H motif) is located at residues Leu18–Phe57. Gly92–Gly97 serves as a coordination point for NAD(+).

It belongs to the transcriptional regulatory Rex family. Homodimer.

The protein localises to the cytoplasm. Functionally, modulates transcription in response to changes in cellular NADH/NAD(+) redox state. The sequence is that of Redox-sensing transcriptional repressor Rex from Staphylococcus carnosus (strain TM300).